We begin with the raw amino-acid sequence, 237 residues long: Aliphatic sulfonates import ATP-binding protein SsuB 1 (237 aa).

Residues 5-221 (LMDIRVEHKA…PRDRRDPLLA (217 aa)) form the ABC transporter domain. Residue 38–45 (GPSGCGKS) participates in ATP binding.

The protein belongs to the ABC transporter superfamily. Aliphatic sulfonates importer (TC 3.A.1.17.2) family. In terms of assembly, the complex is composed of two ATP-binding proteins (SsuB), two transmembrane proteins (SsuC) and a solute-binding protein (SsuA).

It is found in the cell inner membrane. The enzyme catalyses ATP + H2O + aliphatic sulfonate-[sulfonate-binding protein]Side 1 = ADP + phosphate + aliphatic sulfonateSide 2 + [sulfonate-binding protein]Side 1.. Part of the ABC transporter complex SsuABC involved in aliphatic sulfonates import. Responsible for energy coupling to the transport system. The polypeptide is Aliphatic sulfonates import ATP-binding protein SsuB 1 (Pseudomonas syringae pv. syringae (strain B728a)).